We begin with the raw amino-acid sequence, 203 residues long: Twist-related protein 1 (203 aa).

The span at 1-18 (MMQDVSSSPVSPADDSLS) shows a compositional bias: low complexity. A disordered region spans residues 1–107 (MMQDVSSSPV…GGSPQSCEEL (107 aa)). Positions 34–43 (RGGRKRRSSR) are enriched in basic residues. 2 stretches are compositionally biased toward gly residues: residues 46–65 (AGGG…GGDE) and 80–100 (GCGG…GGGS). A bHLH domain is found at 109 to 160 (TQRVMANVRERQRTQSLNEPFAALRKIIPTLPSDKLSKIQTLKLAARYIDFL). The interval 162–192 (RVLQSDELDSKTASCSYVAHEWLSYAFSVWR) is sufficient for transactivation activity.

Efficient DNA binding requires dimerization with another bHLH protein. Homodimer or heterodimer with E proteins such as TCF3. ID1 binds preferentially to TCF3 but does not interact efficiently with TWIST1 so ID1 levels control the amount of TCF3 available to dimerize with TWIST and thus determine the type of dimer formed.

The protein resides in the nucleus. Acts as a transcriptional regulator. Inhibits myogenesis by sequestrating E proteins, inhibiting trans-activation by MEF2, and inhibiting DNA-binding by MYOD1 through physical interaction. This interaction probably involves the basic domains of both proteins. Also represses expression of pro-inflammatory cytokines such as TNFA and IL1B. Regulates cranial suture patterning and fusion. Activates transcription as a heterodimer with E proteins. Regulates gene expression differentially, depending on dimer composition. Homodimers induce expression of FGFR2 and POSTN while heterodimers repress FGFR2 and POSTN expression and induce THBS1 expression. Heterodimerization is also required for osteoblast differentiation. Represses the activity of the circadian transcriptional activator: NPAS2-BMAL1 heterodimer. This chain is Twist-related protein 1 (TWIST1), found in Gorilla gorilla gorilla (Western lowland gorilla).